The chain runs to 276 residues: Release factor glutamine methyltransferase (276 aa).

Residues 117–121 (GTGTG), D140, W168, and N182 each bind S-adenosyl-L-methionine. A substrate-binding site is contributed by 182 to 185 (NPPY).

It belongs to the protein N5-glutamine methyltransferase family. PrmC subfamily.

The catalysed reaction is L-glutaminyl-[peptide chain release factor] + S-adenosyl-L-methionine = N(5)-methyl-L-glutaminyl-[peptide chain release factor] + S-adenosyl-L-homocysteine + H(+). Functionally, methylates the class 1 translation termination release factors RF1/PrfA and RF2/PrfB on the glutamine residue of the universally conserved GGQ motif. In Yersinia pestis, this protein is Release factor glutamine methyltransferase.